A 1030-amino-acid polypeptide reads, in one-letter code: ADAMTS-like protein 4 (1030 aa).

Positions 1–24 (MELWLGRLWLYVMLLLLLLQLCQD) are cleaved as a signal peptide. Positions 47–91 (GPWGRWASCSQPCGVGVQRRSRTCELHPALSLPPRPPRHPEAPQP) constitute a TSP type-1 1 domain. Disordered regions lie at residues 73 to 150 (HPAL…KPGM) and 168 to 306 (LAHK…LPLT). Polar residues-rich tracts occupy residues 176–186 (KDSSTAEETLP), 211–237 (QSRS…SSAP), and 245–257 (PTSS…SFQG). Residues N451 and N731 are each glycosylated (N-linked (GlcNAc...) asparagine). TSP type-1 domains are found at residues 681 to 740 (CPPY…QLRL), 741 to 800 (CGHW…GPCT), 803 to 865 (WFYS…GPCE), 866 to 925 (KTWR…QGQA), and 926 to 982 (CEDQ…QPCN). A PLAC domain is found at 985 to 1022 (PDDQCKDSSPHCPLVVQARLCVYPYYTATCCRSCAHVL).

As to quaternary structure, interacts with CTSB. Interacts with FBN1. Post-translationally, glycosylated. Can be O-fucosylated by POFUT2 on a serine or a threonine residue found within the consensus sequence C1-X(2)-(S/T)-C2-G of the TSP type-1 repeat domains where C1 and C2 are the first and second cysteine residue of the repeat, respectively. Fucosylated repeats can then be further glycosylated by the addition of a beta-1,3-glucose residue by the glucosyltransferase, B3GALTL. Fucosylation mediates the efficient secretion of ADAMTS family members. Can also be C-glycosylated with one or two mannose molecules on tryptophan residues within the consensus sequence W-X-X-W of the TPRs, and N-glycosylated. These other glycosylations can also facilitate secretion.

It is found in the secreted. The protein localises to the extracellular space. It localises to the extracellular matrix. In terms of biological role, positive regulation of apoptosis. May facilitate FBN1 microfibril biogenesis. The sequence is that of ADAMTS-like protein 4 from Rattus norvegicus (Rat).